The primary structure comprises 386 residues: Alanine racemase (386 aa).

K38 functions as the Proton acceptor; specific for D-alanine in the catalytic mechanism. K38 carries the post-translational modification N6-(pyridoxal phosphate)lysine. Position 136 (R136) interacts with substrate. The active-site Proton acceptor; specific for L-alanine is Y267. M315 lines the substrate pocket.

This sequence belongs to the alanine racemase family. Pyridoxal 5'-phosphate is required as a cofactor.

The enzyme catalyses L-alanine = D-alanine. It functions in the pathway amino-acid biosynthesis; D-alanine biosynthesis; D-alanine from L-alanine: step 1/1. Its function is as follows. Catalyzes the interconversion of L-alanine and D-alanine. May also act on other amino acids. The chain is Alanine racemase (alr) from Clostridium perfringens (strain SM101 / Type A).